A 354-amino-acid chain; its full sequence is Biotin synthase (354 aa).

One can recognise a Radical SAM core domain in the interval 41 to 265 (NEVQISRLLS…IMPHSRVRLS (225 aa)). Residues Cys-56, Cys-60, and Cys-63 each coordinate [4Fe-4S] cluster. Cys-100, Cys-131, Cys-191, and Arg-263 together coordinate [2Fe-2S] cluster.

The protein belongs to the radical SAM superfamily. Biotin synthase family. In terms of assembly, homodimer. [4Fe-4S] cluster serves as cofactor. It depends on [2Fe-2S] cluster as a cofactor.

It carries out the reaction (4R,5S)-dethiobiotin + (sulfur carrier)-SH + 2 reduced [2Fe-2S]-[ferredoxin] + 2 S-adenosyl-L-methionine = (sulfur carrier)-H + biotin + 2 5'-deoxyadenosine + 2 L-methionine + 2 oxidized [2Fe-2S]-[ferredoxin]. It functions in the pathway cofactor biosynthesis; biotin biosynthesis; biotin from 7,8-diaminononanoate: step 2/2. In terms of biological role, catalyzes the conversion of dethiobiotin (DTB) to biotin by the insertion of a sulfur atom into dethiobiotin via a radical-based mechanism. The sequence is that of Biotin synthase from Shewanella sediminis (strain HAW-EB3).